A 404-amino-acid chain; its full sequence is Flavohemoprotein (404 aa).

The Globin domain maps to 1-138 (MLSEQTRSLV…LADTLIGIEN (138 aa)). Residue His-85 coordinates heme b. Active-site charge relay system residues include Tyr-95 and Glu-137. The interval 149–404 (GGWSGWRPFR…EVFGSHPGDD (256 aa)) is reductase. The region spanning 152–263 (SGWRPFRVAK…SAPQGDFFLH (112 aa)) is the FAD-binding FR-type domain. FAD-binding positions include Tyr-190 and 206–209 (RQYS). 276-281 (GVGQTP) provides a ligand contact to NADP(+). An FAD-binding site is contributed by 396-399 (VFGS).

Belongs to the globin family. Two-domain flavohemoproteins subfamily. The protein in the C-terminal section; belongs to the flavoprotein pyridine nucleotide cytochrome reductase family. It depends on heme b as a cofactor. The cofactor is FAD.

It carries out the reaction 2 nitric oxide + NADPH + 2 O2 = 2 nitrate + NADP(+) + H(+). The enzyme catalyses 2 nitric oxide + NADH + 2 O2 = 2 nitrate + NAD(+) + H(+). Is involved in NO detoxification in an aerobic process, termed nitric oxide dioxygenase (NOD) reaction that utilizes O(2) and NAD(P)H to convert NO to nitrate, which protects the bacterium from various noxious nitrogen compounds. Therefore, plays a central role in the inducible response to nitrosative stress. This chain is Flavohemoprotein, found in Chromobacterium violaceum (strain ATCC 12472 / DSM 30191 / JCM 1249 / CCUG 213 / NBRC 12614 / NCIMB 9131 / NCTC 9757 / MK).